We begin with the raw amino-acid sequence, 329 residues long: Cathepsin K (329 aa).

A signal peptide spans 1 to 15 (MWVFKFLLLPVVSFA). The propeptide at 16 to 114 (LSPEETLDTQ…TLYTPEWEGR (99 aa)) is activation peptide. A glycan (N-linked (GlcNAc...) asparagine) is linked at Asn-103. Intrachain disulfides connect Cys-136–Cys-177 and Cys-170–Cys-210. The active site involves Cys-139. An N-linked (GlcNAc...) asparagine glycan is attached at Asn-213. A disulfide bridge connects residues Cys-269 and Cys-318. Active-site residues include His-276 and Asn-296.

The protein belongs to the peptidase C1 family.

It localises to the lysosome. The protein localises to the secreted. It is found in the apical cell membrane. It carries out the reaction Broad proteolytic activity. With small-molecule substrates and inhibitors, the major determinant of specificity is P2, which is preferably Leu, Met &gt; Phe, and not Arg.. Thiol protease involved in osteoclastic bone resorption and may participate partially in the disorder of bone remodeling. Displays potent endoprotease activity against fibrinogen at acid pH. May play an important role in extracellular matrix degradation. Involved in the release of thyroid hormone thyroxine (T4) by limited proteolysis of TG/thyroglobulin in the thyroid follicle lumen. The chain is Cathepsin K (Ctsk) from Rattus norvegicus (Rat).